A 266-amino-acid chain; its full sequence is MICOS complex subunit MIC27 (266 aa).

The N-terminal 27 residues, 1–27 (MAAIRMGKLTTMPAGLIYASVSVHAAK), are a transit peptide targeting the mitochondrion. Topologically, residues 28–110 (EEESKKQLVK…YVYMKNPPRD (83 aa)) are mitochondrial intermembrane. The helical transmembrane segment at 111–129 (FLPKMGVITVSGLAGLVSA) threads the bilayer. Residues 130-137 (RKGSKFKK) lie on the Mitochondrial matrix side of the membrane. Residues 138 to 155 (ITYPLGLATLGATVCYPV) traverse the membrane as a helical segment. Topologically, residues 156–266 (QSVIIAKVTA…NVTNSGVLRI (111 aa)) are mitochondrial intermembrane. Position 204 is a phosphoserine (Ser204).

Belongs to the apolipoprotein O/MICOS complex subunit Mic27 family. As to quaternary structure, component of the mitochondrial contact site and cristae organizing system (MICOS) complex, composed of at least MICOS10/MIC10, CHCHD3/MIC19, CHCHD6/MIC25, APOOL/MIC27, IMMT/MIC60, APOO/MIC23/MIC26 and MICOS13/MIC13. This complex was also known under the names MINOS or MitOS complex. The MICOS complex associates with mitochondrial outer membrane proteins SAMM50, MTX1 and MTX2 (together described as components of the mitochondrial outer membrane sorting assembly machinery (SAM) complex) and DNAJC11, mitochondrial inner membrane protein TMEM11 and with HSPA9. The MICOS and SAM complexes together with DNAJC11 are part of a large protein complex spanning both membranes termed the mitochondrial intermembrane space bridging (MIB) complex. Interacts with MICOS10/MIC10, IMMT/MIC60 and APOO/MIC23/MIC26.

The protein resides in the mitochondrion inner membrane. Its subcellular location is the mitochondrion. In terms of biological role, component of the MICOS complex, a large protein complex of the mitochondrial inner membrane that plays crucial roles in the maintenance of crista junctions, inner membrane architecture, and formation of contact sites to the outer membrane. Specifically binds to cardiolipin (in vitro) but not to the precursor lipid phosphatidylglycerol. Plays a crucial role in crista junction formation and mitochondrial function. The chain is MICOS complex subunit MIC27 (APOOL) from Pongo abelii (Sumatran orangutan).